The following is a 257-amino-acid chain: uncharacterized protein (257 aa).

A helical membrane pass occupies residues 6–26; that stretch reads IFWLNLAAIIIISIVVSGGMF.

The protein belongs to the staphylococcal tandem lipoprotein family.

The protein resides in the cell membrane. This is an uncharacterized protein from Staphylococcus aureus (strain MSSA476).